The primary structure comprises 64 residues: Large ribosomal subunit protein bL35 (64 aa).

Basic residues predominate over residues 1–42 (MPKAKTHSGASKRFRRTGTGKIVRQKANRRHLLEHKPTKRTR). A disordered region spans residues 1-64 (MPKAKTHSGA…NSRINKLLNG (64 aa)). Residues 48–58 (TTVSAADNSRI) show a composition bias toward polar residues.

Belongs to the bacterial ribosomal protein bL35 family.

The chain is Large ribosomal subunit protein bL35 from Mycolicibacterium smegmatis (strain ATCC 700084 / mc(2)155) (Mycobacterium smegmatis).